Here is a 244-residue protein sequence, read N- to C-terminus: 7-cyano-7-deazaguanine synthase (244 aa).

14–24 lines the ATP pocket; it reads FSGGQDSATCV. Residues cysteine 202, cysteine 217, cysteine 220, and cysteine 223 each contribute to the Zn(2+) site.

The protein belongs to the QueC family. It depends on Zn(2+) as a cofactor.

It carries out the reaction 7-carboxy-7-deazaguanine + NH4(+) + ATP = 7-cyano-7-deazaguanine + ADP + phosphate + H2O + H(+). It participates in purine metabolism; 7-cyano-7-deazaguanine biosynthesis. Its function is as follows. Catalyzes the ATP-dependent conversion of 7-carboxy-7-deazaguanine (CDG) to 7-cyano-7-deazaguanine (preQ(0)). In Burkholderia vietnamiensis (strain G4 / LMG 22486) (Burkholderia cepacia (strain R1808)), this protein is 7-cyano-7-deazaguanine synthase.